The sequence spans 195 residues: Small ribosomal subunit protein bS16 (195 aa).

The span at proline 171–alanine 181 shows a compositional bias: low complexity. A disordered region spans residues proline 171 to alanine 195.

Belongs to the bacterial ribosomal protein bS16 family.

The protein is Small ribosomal subunit protein bS16 of Chlorobium luteolum (strain DSM 273 / BCRC 81028 / 2530) (Pelodictyon luteolum).